The primary structure comprises 437 residues: Palmitoyltransferase PFA4 (437 aa).

The Cytoplasmic portion of the chain corresponds to 1 to 12 (MAGLNDVPFIKG). The chain crosses the membrane as a helical span at residues 13 to 33 (LAVPSVCALIIFLGYASQFLF). Topologically, residues 34-48 (NYSTTLEPGPPTRRE) are lumenal. The helical transmembrane segment at 49 to 69 (TIIFNGLLLVLWITYYRTVAT) threads the bilayer. At 70-130 (DPGRYIFKDR…RNCVSMTTFP (61 aa)) the chain is on the cytoplasmic side. The region spanning 87–137 (RWCNKCAAPKPPRAHHCRHCARCVPRMDHHCPWTRNCVSMTTFPHFLRFLI) is the DHHC domain. Cys-117 acts as the S-palmitoyl cysteine intermediate in catalysis. A helical transmembrane segment spans residues 131–151 (HFLRFLIYTNMSLWMLGYFLW). The Lumenal portion of the chain corresponds to 152-173 (QRFSKIWEHRRLPAYLGPSFYG). A helical membrane pass occupies residues 174–194 (LICLSLISIVNFVTTVALGIM). Residues 195–437 (LINTVKSWVF…KILKKDGLDD (243 aa)) lie on the Cytoplasmic side of the membrane. Positions 377–419 (LDQGLGWVNSDGDRLRDYGVDEEASEPEGVNDDDDDDDDDDVP) are disordered. Positions 396–419 (VDEEASEPEGVNDDDDDDDDDDVP) are enriched in acidic residues.

This sequence belongs to the DHHC palmitoyltransferase family. PFA4 subfamily.

It localises to the endoplasmic reticulum membrane. It catalyses the reaction L-cysteinyl-[protein] + hexadecanoyl-CoA = S-hexadecanoyl-L-cysteinyl-[protein] + CoA. Mediates the reversible addition of palmitate to target proteins, thereby regulating their membrane association and biological function. The chain is Palmitoyltransferase PFA4 from Gibberella zeae (strain ATCC MYA-4620 / CBS 123657 / FGSC 9075 / NRRL 31084 / PH-1) (Wheat head blight fungus).